The chain runs to 76 residues: Tautomerase PptA (76 aa).

Proline 2 acts as the Proton acceptor; via imino nitrogen in catalysis.

It belongs to the 4-oxalocrotonate tautomerase family. PptA subfamily. As to quaternary structure, homodimer.

Its subcellular location is the cytoplasm. The sequence is that of Tautomerase PptA from Pectobacterium atrosepticum (strain SCRI 1043 / ATCC BAA-672) (Erwinia carotovora subsp. atroseptica).